A 303-amino-acid chain; its full sequence is Probable cell division protein WhiA (303 aa).

The H-T-H motif DNA-binding region spans 272–303; sequence SIQQIADSIEPPLTKSGVNHRLRKINKIADDL.

It belongs to the WhiA family.

In terms of biological role, involved in cell division and chromosome segregation. In Streptococcus thermophilus (strain ATCC BAA-250 / LMG 18311), this protein is Probable cell division protein WhiA.